The sequence spans 75 residues: MKFFTCLLLLLVVLTVVFDNVDACDRSCTGVMGHPSCATCCACFTSAGKRHADGQHSRMKVRTGAKNLLKRMPLH.

Residues 1 to 23 form the signal peptide; the sequence is MKFFTCLLLLLVVLTVVFDNVDA. 3 cysteine pairs are disulfide-bonded: C24–C28, C37–C40, and C41–C43. The propeptide occupies 24–50; that stretch reads CDRSCTGVMGHPSCATCCACFTSAGKR.

Expressed by the venom duct.

It is found in the secreted. In terms of biological role, probable neurotoxin. This Conus imperialis (Imperial cone) protein is Conotoxin Im23.5.